Reading from the N-terminus, the 366-residue chain is MGMSQPGVLLSLLLVLLPQTWGAEPRLPLMYHLAAVSDLSTGLPSFWATGWLGAQQYLTYNNLRQEADPCGAWIWENQVSWYWEKETTDLKSKEQLFLEAIRTLENQINGTFTLQGLLGCELAPDNSSLPTAVFALNGEEFMRFNPRTGNWSGEWPETDIVGNLWMKQPEAARKESEFLLTSCPERLLGHLERGRQNLEWKEPPSMRLKARPGNSGSSVLTCAAFSFYPPELKFRFLRNGLASGSGNCSTGPNGDGSFHAWSLLEVKRGDEHHYQCQVEHEGLAQPLTVDLDSPARSSVPVVGIILGLLLVVVAIAGGVLLWNRMRSGLPAPWLSLSGDDSGDLLPGGNLPPEAEPQGVNAFPATS.

A signal peptide spans 1–22 (MGMSQPGVLLSLLLVLLPQTWG). The segment at 23 to 111 (AEPRLPLMYH…RTLENQINGT (89 aa)) is alpha-1. Residues 23–298 (AEPRLPLMYH…VDLDSPARSS (276 aa)) are Extracellular-facing. 4 N-linked (GlcNAc...) asparagine glycosylation sites follow: Asn109, Asn126, Asn150, and Asn247. The segment at 112-201 (FTLQGLLGCE…ERGRQNLEWK (90 aa)) is alpha-2. Intrachain disulfides connect Cys120-Cys183 and Cys222-Cys276. Residues 202 to 291 (EPPSMRLKAR…GLAQPLTVDL (90 aa)) form an alpha-3 region. The Ig-like C1-type domain occupies 203–290 (PPSMRLKARP…EGLAQPLTVD (88 aa)). Residues 293 to 298 (SPARSS) are connecting peptide. A helical transmembrane segment spans residues 299 to 322 (VPVVGIILGLLLVVVAIAGGVLLW). Residues 323 to 366 (NRMRSGLPAPWLSLSGDDSGDLLPGGNLPPEAEPQGVNAFPATS) lie on the Cytoplasmic side of the membrane. The residue at position 335 (Ser335) is a Phosphoserine. The tract at residues 344–366 (LLPGGNLPPEAEPQGVNAFPATS) is disordered.

Belongs to the immunoglobulin superfamily. In terms of assembly, fcRn complex consists of two subunits: p51, and p14 which is equivalent to beta-2-microglobulin. It forms an MHC class I-like heterodimer. Interacts with albumin/ALB; this interaction regulates ALB homeostasis. Intestinal epithelium.

The protein localises to the cell membrane. It localises to the endosome membrane. Cell surface receptor that transfers passive humoral immunity from the mother to the newborn. Binds to the Fc region of monomeric immunoglobulin gamma and mediates its selective uptake from milk. IgG in the milk is bound at the apical surface of the intestinal epithelium. The resultant FcRn-IgG complexes are transcytosed across the intestinal epithelium and IgG is released from FcRn into blood or tissue fluids. Throughout life, contributes to effective humoral immunity by recycling IgG and extending its half-life in the circulation. Mechanistically, monomeric IgG binding to FcRn in acidic endosomes of endothelial and hematopoietic cells recycles IgG to the cell surface where it is released into the circulation. In addition of IgG, regulates homeostasis of the other most abundant circulating protein albumin/ALB. This chain is IgG receptor FcRn large subunit p51 (Fcgrt), found in Rattus norvegicus (Rat).